Consider the following 793-residue polypeptide: Probable serine/threonine-protein kinase fnkA (793 aa).

Positions 11 to 358 (WEILSQLGTG…IINLISHNFI (348 aa)) constitute a Protein kinase domain. ATP is bound by residues 17 to 25 (LGTGAFGRV) and Lys46. The Proton acceptor role is filled by Asp138. 5 FNIP repeats span residues 403–444 (FNQT…FGAR), 470–514 (YNQP…ILGD), 515–557 (YDQK…LGYR), 558–601 (FNKA…LGYC), and 691–733 (FIRP…LGSR).

It belongs to the protein kinase superfamily. STE Ser/Thr protein kinase family. Mg(2+) is required as a cofactor.

The catalysed reaction is L-seryl-[protein] + ATP = O-phospho-L-seryl-[protein] + ADP + H(+). It carries out the reaction L-threonyl-[protein] + ATP = O-phospho-L-threonyl-[protein] + ADP + H(+). This chain is Probable serine/threonine-protein kinase fnkA, found in Dictyostelium discoideum (Social amoeba).